A 484-amino-acid chain; its full sequence is TPR repeat-containing protein YvcD (484 aa).

TPR repeat units follow at residues 21 to 54 (GQYF…EPED), 55 to 88 (SEML…LEAE), and 187 to 220 (WSAY…NEGN).

The chain is TPR repeat-containing protein YvcD (yvcD) from Bacillus subtilis (strain 168).